The sequence spans 85 residues: UPF0181 protein YE1782 (85 aa).

2 disordered regions span residues 1–22 (MLAGMPSLSHEEQQEAVERIHQ) and 57–85 (DTDFDEHDESDYRRDNEQDADEIEDPYEG). Over residues 9-21 (SHEEQQEAVERIH) the composition is skewed to basic and acidic residues. The segment covering 74–85 (QDADEIEDPYEG) has biased composition (acidic residues).

Belongs to the UPF0181 family.

This is UPF0181 protein YE1782 from Yersinia enterocolitica serotype O:8 / biotype 1B (strain NCTC 13174 / 8081).